A 635-amino-acid chain; its full sequence is Probable monoacyl phosphatidylinositol tetramannoside-binding protein LpqW (635 aa).

A signal peptide spans 1–26; the sequence is MGVPSPVRRVCVTVGALVALACMVLA. Disordered stretches follow at residues 32 to 52, 389 to 412, and 511 to 551; these read PPPA…PRRP, NTSV…GPPE, and NAPT…LVKA. Composition is skewed to low complexity over residues 390–411 and 511–531; these read TSVS…TGPP and NAPT…APDT.

The protein belongs to the bacterial solute-binding protein 5 family.

It participates in phospholipid metabolism; phosphatidylinositol metabolism. Functionally, may directly or indirectly regulate the accessibility of the key branch point intermediate, monoacyl phosphatidylinositol tetramannoside (AcPIM4), to the elongating alpha-1,6 mannosyltransferases which could regulate the lipoarabinomannans (LAMs) biosynthesis. This is Probable monoacyl phosphatidylinositol tetramannoside-binding protein LpqW (lpqW) from Mycobacterium tuberculosis (strain CDC 1551 / Oshkosh).